The following is a 144-amino-acid chain: Large ribosomal subunit protein uL16 (144 aa).

Belongs to the universal ribosomal protein uL16 family. Part of the 50S ribosomal subunit.

Binds 23S rRNA and is also seen to make contacts with the A and possibly P site tRNAs. The polypeptide is Large ribosomal subunit protein uL16 (Lysinibacillus sphaericus (strain C3-41)).